The following is a 144-amino-acid chain: Large ribosomal subunit protein uL16 (144 aa).

It belongs to the universal ribosomal protein uL16 family. Part of the 50S ribosomal subunit.

Functionally, binds 23S rRNA and is also seen to make contacts with the A and possibly P site tRNAs. In Acidobacterium capsulatum (strain ATCC 51196 / DSM 11244 / BCRC 80197 / JCM 7670 / NBRC 15755 / NCIMB 13165 / 161), this protein is Large ribosomal subunit protein uL16.